A 252-amino-acid polypeptide reads, in one-letter code: Small ribosomal subunit protein uS3 (252 aa).

The region spanning 39-111 (IRKLINNFTK…DVNLNVLEVK (73 aa)) is the KH type-2 domain. The disordered stretch occupies residues 222-252 (KPFASQSSNTPNRRPRNFKGGNNNHVNAKKN). Polar residues predominate over residues 241–252 (GGNNNHVNAKKN).

Belongs to the universal ribosomal protein uS3 family. Part of the 30S ribosomal subunit. Forms a tight complex with proteins S10 and S14.

Functionally, binds the lower part of the 30S subunit head. Binds mRNA in the 70S ribosome, positioning it for translation. This chain is Small ribosomal subunit protein uS3, found in Onion yellows phytoplasma (strain OY-M).